Reading from the N-terminus, the 318-residue chain is tRNA uridine(34) hydroxylase (318 aa).

The Rhodanese domain maps to 123–217 (EDDDTVIIDA…YGKDPETKGQ (95 aa)). Catalysis depends on Cys-177, which acts as the Cysteine persulfide intermediate.

It belongs to the TrhO family.

It catalyses the reaction uridine(34) in tRNA + AH2 + O2 = 5-hydroxyuridine(34) in tRNA + A + H2O. Catalyzes oxygen-dependent 5-hydroxyuridine (ho5U) modification at position 34 in tRNAs. This chain is tRNA uridine(34) hydroxylase, found in Staphylococcus aureus (strain Mu3 / ATCC 700698).